We begin with the raw amino-acid sequence, 491 residues long: Glucose-6-phosphate exchanger SLC37A2 (491 aa).

Residues 5–25 (LAPGIWYRAFILLITFLIYTC) form a helical membrane-spanning segment. N-linked (GlcNAc...) asparagine glycans are attached at residues N43, N52, and N58. 5 consecutive transmembrane segments (helical) span residues 78-98 (GAVDNAFLVAYAIGMFISGIF), 108-130 (LTAGMLLSGLFTSLFGLGYFWNI), 132-154 (VLWYFVLVQIFNGLVQTTGWPAV), 169-189 (LIMGIWNSHTSVGNILGSLLA), and 200-220 (SFVVPGVITAIMGIITFFFLI). The disordered stretch occupies residues 229-257 (SPPQHHGNPEESQDQPEDPANGPSCNKES). The next 6 helical transmembrane spans lie at 292 to 312 (LCLLFAKLVSYTFLYWLPLYI), 328 to 348 (TLFDVGGIIGGILAGLVSDYI), 352 to 372 (ATTCCVMLILAAPMMFLYNHV), 377 to 397 (IGISIVMLLICGALVNGPYAL), 424 to 444 (AIIDGTGSIGAALGPLLAGLI), and 452 to 472 (VFYMLIAADVLACLLLCRLVY).

The protein belongs to the major facilitator superfamily. Organophosphate:Pi antiporter (OPA) (TC 2.A.1.4) family.

The protein localises to the endoplasmic reticulum membrane. It catalyses the reaction D-glucose 6-phosphate(in) + phosphate(out) = D-glucose 6-phosphate(out) + phosphate(in). Inhibited by vanadate but not by chlorogenic acid. Inorganic phosphate and glucose-6-phosphate antiporter. May transport cytoplasmic glucose-6-phosphate into the lumen of the endoplasmic reticulum and translocate inorganic phosphate into the opposite direction. Independent of a lumenal glucose-6-phosphatase. May not play a role in homeostatic regulation of blood glucose levels. In Bos taurus (Bovine), this protein is Glucose-6-phosphate exchanger SLC37A2.